The chain runs to 238 residues: Ribonuclease PH (238 aa).

Phosphate-binding positions include Arg86 and 124 to 126 (GTR).

It belongs to the RNase PH family. In terms of assembly, homohexameric ring arranged as a trimer of dimers.

The catalysed reaction is tRNA(n+1) + phosphate = tRNA(n) + a ribonucleoside 5'-diphosphate. In terms of biological role, phosphorolytic 3'-5' exoribonuclease that plays an important role in tRNA 3'-end maturation. Removes nucleotide residues following the 3'-CCA terminus of tRNAs; can also add nucleotides to the ends of RNA molecules by using nucleoside diphosphates as substrates, but this may not be physiologically important. Probably plays a role in initiation of 16S rRNA degradation (leading to ribosome degradation) during starvation. This chain is Ribonuclease PH, found in Mesorhizobium japonicum (strain LMG 29417 / CECT 9101 / MAFF 303099) (Mesorhizobium loti (strain MAFF 303099)).